Reading from the N-terminus, the 359-residue chain is Serine/threonine-protein phosphatase 2A activator 2 (359 aa).

It belongs to the PTPA-type PPIase family.

Its subcellular location is the cytoplasm. It catalyses the reaction [protein]-peptidylproline (omega=180) = [protein]-peptidylproline (omega=0). Its function is as follows. PPIases accelerate the folding of proteins. It catalyzes the cis-trans isomerization of proline imidic peptide bonds in oligopeptides. Acts as a regulatory subunit for PP2A-like phosphatases modulating their activity or substrate specificity, probably by inducing a conformational change in the catalytic subunit, a direct target of the PPIase. Can reactivate inactive phosphatase PP2A-phosphatase methylesterase complexes (PP2Ai) in presence of ATP and Mg(2+) by dissociating the inactive form from the complex. The polypeptide is Serine/threonine-protein phosphatase 2A activator 2 (RRD2) (Eremothecium gossypii (strain ATCC 10895 / CBS 109.51 / FGSC 9923 / NRRL Y-1056) (Yeast)).